The chain runs to 269 residues: uncharacterized protein (269 aa).

The stretch at valine 3–alanine 66 forms a coiled coil. The interval alanine 83–glutamate 142 is disordered. Positions glutamate 94–glutamate 111 are enriched in acidic residues. Over residues proline 112 to serine 136 the composition is skewed to basic and acidic residues.

This is an uncharacterized protein from Archaeoglobus fulgidus (strain ATCC 49558 / DSM 4304 / JCM 9628 / NBRC 100126 / VC-16).